The following is a 419-amino-acid chain: 20-hydroxy-prefusarin hydrolase FUS2 (419 aa).

S238 is a catalytic residue.

This sequence belongs to the AB hydrolase superfamily. FUS2 hydrolase family.

The protein operates within mycotoxin biosynthesis. In terms of biological role, 20-hydroxy-prefusarin hydrolase; part of the gene cluster that mediates the biosynthesis of the mycotoxin fusarin C. Within the cluster, FUS1, FUS2, FUS8 and FUS9 are sufficient for fusarin production. The roles of the other FUS members are yet undetermined. The fusarin C synthetase FUS1 is responsible for the condensation of one acetyl-coenzyme A (CoA) unit with six malonyl-CoA units and the amide linkage of the arising heptaketide and homoserine, subsequently releasing the first intermediate, prefusarin, as an alcohol with an open ring structure. The cytochrome P450 monooxygenase FUS8 participates in multiple oxidation processes at carbon C-20 and is able to use the FUS1 product as substrate, resulting in formation of 20-hydroxy-prefusarin. This reaction seems to be essential before the 2-pyrrolidone ring closure can be catalyzed by FUS2, generating 20-hydroxy-fusarin. FUS8 is able to further oxidizes carbon C-20 after ring closure, resulting in the formation of carboxy-fusarin C. As the last step, FUS9 methylates the hydroxyl group at C-21 to generate fusarin C. Fusarin C can then rearrange to epi-fusarin C, the (z)-isomers, and fusarin A and fusarin D. This chain is 20-hydroxy-prefusarin hydrolase FUS2, found in Gibberella moniliformis (strain M3125 / FGSC 7600) (Maize ear and stalk rot fungus).